The sequence spans 87 residues: Kappa-4-bungarotoxin (87 aa).

The first 21 residues, 1–21 (MKTLLLTLVVVTIVCLDLGYT), serve as a signal peptide directing secretion. 5 disulfides stabilise this stretch: Cys-24–Cys-42, Cys-35–Cys-63, Cys-48–Cys-52, Cys-67–Cys-79, and Cys-80–Cys-85.

This sequence belongs to the three-finger toxin family. Long-chain subfamily. Kappa-neurotoxin sub-subfamily. As to quaternary structure, homo- and heterodimer; non-covalently linked. In terms of tissue distribution, expressed by the venom gland.

The protein localises to the secreted. Its function is as follows. Postsynaptic neurotoxin that binds and inhibits neuronal nicotinic acetylcholine receptors (nAChR) with high affinity (IC(50)&lt;100 nM). Is a selective, and slowly reversible antagonist of alpha-3/CHRNA3-containing and some alpha-4/CHRNA4-containing AChRs. The chain is Kappa-4-bungarotoxin from Bungarus multicinctus (Many-banded krait).